The sequence spans 329 residues: Holliday junction branch migration complex subunit RuvB (329 aa).

Positions 1 to 181 (MNELLHQHKA…FGIPLHLEFY (181 aa)) are large ATPase domain (RuvB-L). ATP contacts are provided by Leu20, Arg21, Gly62, Lys65, Thr66, Thr67, Arg171, Tyr181, and Arg218. A Mg(2+)-binding site is contributed by Thr66. The small ATPAse domain (RuvB-S) stretch occupies residues 182–252 (SVEELMLVIK…FADSALFNLG (71 aa)). The head domain (RuvB-H) stretch occupies residues 255-329 (KSGLDKMDIK…IEHLMNYKYI (75 aa)). Arg308 and Arg313 together coordinate DNA.

Belongs to the RuvB family. As to quaternary structure, homohexamer. Forms an RuvA(8)-RuvB(12)-Holliday junction (HJ) complex. HJ DNA is sandwiched between 2 RuvA tetramers; dsDNA enters through RuvA and exits via RuvB. An RuvB hexamer assembles on each DNA strand where it exits the tetramer. Each RuvB hexamer is contacted by two RuvA subunits (via domain III) on 2 adjacent RuvB subunits; this complex drives branch migration. In the full resolvosome a probable DNA-RuvA(4)-RuvB(12)-RuvC(2) complex forms which resolves the HJ.

It is found in the cytoplasm. The enzyme catalyses ATP + H2O = ADP + phosphate + H(+). In terms of biological role, the RuvA-RuvB-RuvC complex processes Holliday junction (HJ) DNA during genetic recombination and DNA repair, while the RuvA-RuvB complex plays an important role in the rescue of blocked DNA replication forks via replication fork reversal (RFR). RuvA specifically binds to HJ cruciform DNA, conferring on it an open structure. The RuvB hexamer acts as an ATP-dependent pump, pulling dsDNA into and through the RuvAB complex. RuvB forms 2 homohexamers on either side of HJ DNA bound by 1 or 2 RuvA tetramers; 4 subunits per hexamer contact DNA at a time. Coordinated motions by a converter formed by DNA-disengaged RuvB subunits stimulates ATP hydrolysis and nucleotide exchange. Immobilization of the converter enables RuvB to convert the ATP-contained energy into a lever motion, pulling 2 nucleotides of DNA out of the RuvA tetramer per ATP hydrolyzed, thus driving DNA branch migration. The RuvB motors rotate together with the DNA substrate, which together with the progressing nucleotide cycle form the mechanistic basis for DNA recombination by continuous HJ branch migration. Branch migration allows RuvC to scan DNA until it finds its consensus sequence, where it cleaves and resolves cruciform DNA. The protein is Holliday junction branch migration complex subunit RuvB of Anaplasma phagocytophilum (strain HZ).